A 479-amino-acid chain; its full sequence is Glutamyl-tRNA reductase (479 aa).

Residues 48–51 (TCNR), serine 104, 109–111 (ERQ), and glutamine 115 contribute to the substrate site. Cysteine 49 serves as the catalytic Nucleophile. 189 to 194 (GAGKMG) is a binding site for NADP(+). Residues 417 to 455 (DAGRSLAEAPDADTPDLGEAPSRCPYMTHDPGGDGTETE) are disordered.

Belongs to the glutamyl-tRNA reductase family. In terms of assembly, homodimer.

The catalysed reaction is (S)-4-amino-5-oxopentanoate + tRNA(Glu) + NADP(+) = L-glutamyl-tRNA(Glu) + NADPH + H(+). The protein operates within porphyrin-containing compound metabolism; protoporphyrin-IX biosynthesis; 5-aminolevulinate from L-glutamyl-tRNA(Glu): step 1/2. Catalyzes the NADPH-dependent reduction of glutamyl-tRNA(Glu) to glutamate 1-semialdehyde (GSA). The sequence is that of Glutamyl-tRNA reductase from Salinibacter ruber (strain DSM 13855 / M31).